The sequence spans 532 residues: Zinc finger protein ZIC 2 (532 aa).

The segment at 100 to 255 (PHAAHVGSYS…YMRQQCIKQE (156 aa)) is necessary for interaction with MDFIC and transcriptional activation or repression. Residues serine 191 and serine 199 each carry the phosphoserine modification. A Glycyl lysine isopeptide (Lys-Gly) (interchain with G-Cter in SUMO2) cross-link involves residue lysine 253. The C2H2-type 1; atypical zinc-finger motif lies at 256-291 (LICKWIDPEQLSNPKKSCNKTFSTMHELVTHVSVEH). The segment at 300-327 (HVCFWEECPREGKPFKAKYKLVNHIRVH) adopts a C2H2-type 2; atypical zinc-finger fold. 3 C2H2-type zinc fingers span residues 333 to 357 (FPCPFPGCGKVFARSENLKIHKRTH), 363 to 387 (FQCEFEGCDRRFANSSDRKKHMHVH), and 393 to 415 (YLCKMCDKSYTHPSSLRKHMKVH). Disordered regions lie at residues 406–452 (SSLR…SSSN) and 475–532 (HRGG…EWYV). Positions 417 to 435 (SSPQGSESSPAASSGYESS) are enriched in low complexity. A compositionally biased stretch (gly residues) spans 476–521 (RGGGSGSGGAGGGSGGGSGSGGGGGGAGGGGGGSSGGGSGTAGGHS). The span at 523 to 532 (LSSNFNEWYV) shows a compositional bias: polar residues.

Belongs to the GLI C2H2-type zinc-finger protein family. Interacts with RNF180. Interacts (via the C2H2-type domains 3, 4 and 5) with MDFIC (via the C2H2-type domains 3, 4 and 5); the interaction reduces its transcriptional activity. Interacts with GLI1 and GLI2. Interacts (via C2H2-type domain 3) with DHX9. In terms of processing, phosphorylated. Post-translationally, ubiquitinated by RNF180, leading to its degradation.

The protein localises to the nucleus. The protein resides in the cytoplasm. Acts as a transcriptional activator or repressor. Plays important roles in the early stage of organogenesis of the CNS. Activates the transcription of the serotonin transporter SERT in uncrossed ipsilateral retinal ganglion cells (iRGCs) to refine eye-specific projections in primary visual targets. Its transcriptional activity is repressed by MDFIC. Involved in the formation of the ipsilateral retinal projection at the optic chiasm midline. Drives the expression of EPHB1 on ipsilaterally projecting growth cones. Binds to the minimal GLI-consensus sequence 5'-TGGGTGGTC-3'. Associates to the basal SERT promoter region from ventrotemporal retinal segments of retinal embryos. The protein is Zinc finger protein ZIC 2 (ZIC2) of Homo sapiens (Human).